The sequence spans 145 residues: Large ribosomal subunit protein uL15 (145 aa).

Positions 1–57 (MKLNDLSPAPGSRREKHRPGRGIGSGLGKTGGRGHKGQTSRSGGTIAPGFEGGQQPL) are disordered. Residues 21–31 (RGIGSGLGKTG) show a composition bias toward gly residues.

It belongs to the universal ribosomal protein uL15 family. Part of the 50S ribosomal subunit.

Binds to the 23S rRNA. The polypeptide is Large ribosomal subunit protein uL15 (Pseudomonas fluorescens (strain Pf0-1)).